The primary structure comprises 155 residues: Riboflavin kinase (155 aa).

4 residues coordinate ATP: Gly15, Lys21, Thr27, and Asn29. The Mg(2+) site is built by Thr27 and Asn29. The active-site Nucleophile is the Glu79. Positions 82, 84, and 91 each coordinate ATP. FMN-binding residues include Arg104, Lys107, and Phe109.

As to quaternary structure, monomer. Directly interacts with TNFRSF1A death domain. TNFRSF1A-binding may be supported by TRADD. In the absence of TNFRSF1A, interacts with TRADD. Independently of TNFRSF1A, interacts with the NADPH oxidase subunit CYBA. Zn(2+) is required as a cofactor. It depends on Mg(2+) as a cofactor. In terms of tissue distribution, detected in brain, placenta and urinary bladder.

The protein localises to the cytoplasm. It catalyses the reaction riboflavin + ATP = FMN + ADP + H(+). It functions in the pathway cofactor biosynthesis; FMN biosynthesis; FMN from riboflavin (ATP route): step 1/1. Catalyzes the phosphorylation of riboflavin (vitamin B2) to form flavin-mononucleotide (FMN), hence rate-limiting enzyme in the synthesis of FAD. Essential for TNF-induced reactive oxygen species (ROS) production. Through its interaction with both TNFRSF1A and CYBA, physically and functionally couples TNFRSF1A to NADPH oxidase. TNF-activation of RFK may enhance the incorporation of FAD in NADPH oxidase, a critical step for the assembly and activation of NADPH oxidase. This chain is Riboflavin kinase (RFK), found in Homo sapiens (Human).